The chain runs to 171 residues: Crossover junction endodeoxyribonuclease RuvC (171 aa).

Catalysis depends on residues Asp7, Glu66, and Asp138. Asp7, Glu66, and Asp138 together coordinate Mg(2+).

Belongs to the RuvC family. In terms of assembly, homodimer which binds Holliday junction (HJ) DNA. The HJ becomes 2-fold symmetrical on binding to RuvC with unstacked arms; it has a different conformation from HJ DNA in complex with RuvA. In the full resolvosome a probable DNA-RuvA(4)-RuvB(12)-RuvC(2) complex forms which resolves the HJ. It depends on Mg(2+) as a cofactor.

The protein resides in the cytoplasm. The catalysed reaction is Endonucleolytic cleavage at a junction such as a reciprocal single-stranded crossover between two homologous DNA duplexes (Holliday junction).. In terms of biological role, the RuvA-RuvB-RuvC complex processes Holliday junction (HJ) DNA during genetic recombination and DNA repair. Endonuclease that resolves HJ intermediates. Cleaves cruciform DNA by making single-stranded nicks across the HJ at symmetrical positions within the homologous arms, yielding a 5'-phosphate and a 3'-hydroxyl group; requires a central core of homology in the junction. The consensus cleavage sequence is 5'-(A/T)TT(C/G)-3'. Cleavage occurs on the 3'-side of the TT dinucleotide at the point of strand exchange. HJ branch migration catalyzed by RuvA-RuvB allows RuvC to scan DNA until it finds its consensus sequence, where it cleaves and resolves the cruciform DNA. In Francisella tularensis subsp. holarctica (strain FTNF002-00 / FTA), this protein is Crossover junction endodeoxyribonuclease RuvC.